Reading from the N-terminus, the 126-residue chain is uncharacterized protein (126 aa).

Residues 1–101 (MQASSEPANV…KSVGSQSADE (101 aa)) are disordered. Composition is skewed to polar residues over residues 14-27 (GQNQ…STSP) and 86-99 (DTEA…SQSA).

This is an uncharacterized protein from Schizosaccharomyces pombe (strain 972 / ATCC 24843) (Fission yeast).